Here is a 342-residue protein sequence, read N- to C-terminus: Spermidine synthase (342 aa).

The disordered stretch occupies residues 9-42 (MKGTELPVKRPREEEAETEMEAANNSNNGCEKEE). A PABS domain is found at 52–289 (PGWFSEISPL…GMIGFMLCST (238 aa)). Q83 contributes to the S-adenosyl 3-(methylsulfanyl)propylamine binding site. Y113 contributes to the putrescine binding site. Residues Q114, D138, E158, 189–190 (DG), and D208 each bind S-adenosyl 3-(methylsulfanyl)propylamine. D208 serves as the catalytic Proton acceptor. Putrescine-binding positions include 208-211 (DSSD) and Y277.

Belongs to the spermidine/spermine synthase family.

It catalyses the reaction S-adenosyl 3-(methylsulfanyl)propylamine + putrescine = S-methyl-5'-thioadenosine + spermidine + H(+). The protein operates within amine and polyamine biosynthesis; spermidine biosynthesis; spermidine from putrescine: step 1/1. This is Spermidine synthase (SPDSYN) from Solanum lycopersicum (Tomato).